The primary structure comprises 265 residues: 5'-nucleotidase SurE (265 aa).

Asp-11, Asp-12, Ser-43, and Asn-101 together coordinate a divalent metal cation.

It belongs to the SurE nucleotidase family. Requires a divalent metal cation as cofactor.

It is found in the cytoplasm. It carries out the reaction a ribonucleoside 5'-phosphate + H2O = a ribonucleoside + phosphate. Nucleotidase that shows phosphatase activity on nucleoside 5'-monophosphates. This is 5'-nucleotidase SurE from Synechococcus sp. (strain CC9311).